The sequence spans 288 residues: UTP--glucose-1-phosphate uridylyltransferase (288 aa).

This sequence belongs to the UDPGP type 2 family.

It carries out the reaction alpha-D-glucose 1-phosphate + UTP + H(+) = UDP-alpha-D-glucose + diphosphate. It functions in the pathway glycolipid metabolism; diglucosyl-diacylglycerol biosynthesis. In terms of biological role, catalyzes the formation of UDP-glucose from glucose-1-phosphate and UTP. This is an intermediate step in the biosynthesis of diglucosyl-diacylglycerol (Glc2-DAG), i.e. the predominant glycolipid found in the S.aureus membrane, which is also used as a membrane anchor for lipoteichoic acid (LTA). In Staphylococcus aureus (strain MSSA476), this protein is UTP--glucose-1-phosphate uridylyltransferase (gtaB).